Here is a 220-residue protein sequence, read N- to C-terminus: Ribonuclease HII (220 aa).

In terms of domain architecture, RNase H type-2 spans 1-210 (MKVAGVDEAG…ARKIEERFRK (210 aa)). 3 residues coordinate a divalent metal cation: aspartate 7, glutamate 8, and aspartate 105.

It belongs to the RNase HII family. Requires Mn(2+) as cofactor. The cofactor is Mg(2+).

The protein localises to the cytoplasm. The enzyme catalyses Endonucleolytic cleavage to 5'-phosphomonoester.. Functionally, endonuclease that specifically degrades the RNA of RNA-DNA hybrids. The sequence is that of Ribonuclease HII (rnhB) from Pyrococcus horikoshii (strain ATCC 700860 / DSM 12428 / JCM 9974 / NBRC 100139 / OT-3).